Here is a 452-residue protein sequence, read N- to C-terminus: Multifunctional glycoside hydrolase (452 aa).

Substrate is bound by residues glutamine 17, histidine 118, and asparagine 162. Catalysis depends on glutamate 163, which acts as the Proton donor. Tyrosine 303 is a binding site for substrate. Glutamate 361 functions as the Nucleophile in the catalytic mechanism. Substrate is bound by residues tryptophan 407 and 414–415 (EW).

Belongs to the glycosyl hydrolase 1 family. In terms of assembly, monomer. Homotrimer.

It catalyses the reaction Hydrolysis of terminal, non-reducing beta-D-glucosyl residues with release of beta-D-glucose.. The enzyme catalyses Hydrolysis of terminal non-reducing beta-D-galactose residues in beta-D-galactosides.. It carries out the reaction Hydrolysis of (1-&gt;4)-beta-D-xylans, to remove successive D-xylose residues from the non-reducing termini.. The catalysed reaction is Hydrolysis of (1-&gt;4)-linkages in (1-&gt;4)-beta-D-glucans, to remove successive glucose units.. It catalyses the reaction Hydrolysis of (1-&gt;4)-beta-D-glucosidic linkages in cellulose and cellotetraose, releasing cellobiose from the non-reducing ends of the chains.. It functions in the pathway glycan metabolism; beta-D-glucan degradation. The protein operates within glycan metabolism; cellulose degradation. Slight activation by Mn(2+), Ni(2+) and K(+). Slight inhibition by Fe(3+), Zn(2+), Co(2+), Mg(2+), Cu(2+), Na(+) and NH4(+). In terms of biological role, has high beta-D-glucosidase, exoglucanase, beta-D-xylosidase, beta-D-galactosidase, and transgalactosylation activities in vitro. Has a very broad substrate specificity with the highest activity with p-nitrophenyl beta-D-galactopyranoside (pNPGal) as substrate. Active with pNP-beta-D-glucopyranoside (pNPGlu), pNP-beta-D-cellobioside (pNPC), lactose, pNP-beta-D-xylopyranoside (pNPX) and cellobiose in the order of decreasing activity, respectively. Very low activity with soluble polysaccharides synanthrin and locust bean gum. Very low, but detectable activity with insoluble substrates such as cotton and filter paper. No activity with pNP-alpha-L-arabinofuranoside (pNPAr) or carboxymethylcellulose (CMC) as substrates. Synthesizes galactooligosaccharides (GalOS) from lactose. Hydrolyzes pretreated corn stover releasing both glucose and xylose. This multifunctional enzyme may provide C.owensensis the benefit of utilizing a wide variety of available carbon sources in its natural growing environment as the ability to convert a wide range of soluble oligosaccharides to monoses is required in order to assimilate them. In Caldicellulosiruptor owensensis (strain ATCC 700167 / DSM 13100 / OL), this protein is Multifunctional glycoside hydrolase.